Consider the following 161-residue polypeptide: MALDATFYALVGLILFFVLIAYLKVPGMVGKALDARADKISNELAEAKRLREEAQSLVAEYQRKRKDAEAEAASIVAAAQREAEMLTAEAKQKTEEFVARRTALSEQKIKQAESDAINAVRAAAVDLAISAAEKVIASKADASAQETLFQKALGEVKSRLN.

Residues 3 to 23 (LDATFYALVGLILFFVLIAYL) form a helical membrane-spanning segment.

Belongs to the ATPase B chain family. F-type ATPases have 2 components, F(1) - the catalytic core - and F(0) - the membrane proton channel. F(1) has five subunits: alpha(3), beta(3), gamma(1), delta(1), epsilon(1). F(0) has three main subunits: a(1), b(2) and c(10-14). The alpha and beta chains form an alternating ring which encloses part of the gamma chain. F(1) is attached to F(0) by a central stalk formed by the gamma and epsilon chains, while a peripheral stalk is formed by the delta and b chains.

It is found in the cell inner membrane. Functionally, f(1)F(0) ATP synthase produces ATP from ADP in the presence of a proton or sodium gradient. F-type ATPases consist of two structural domains, F(1) containing the extramembraneous catalytic core and F(0) containing the membrane proton channel, linked together by a central stalk and a peripheral stalk. During catalysis, ATP synthesis in the catalytic domain of F(1) is coupled via a rotary mechanism of the central stalk subunits to proton translocation. Component of the F(0) channel, it forms part of the peripheral stalk, linking F(1) to F(0). This chain is ATP synthase subunit b 1, found in Sinorhizobium medicae (strain WSM419) (Ensifer medicae).